Reading from the N-terminus, the 457-residue chain is Adenylosuccinate synthetase isozyme 1 (457 aa).

The segment at 1–21 (MSGTRASNDRPPGAGGVKRGR) is disordered. GTP is bound by residues 42 to 48 (GDEGKGK) and 70 to 72 (GHT). The active-site Proton acceptor is the D43. Mg(2+) is bound by residues D43 and G70. D43 provides a ligand contact to substrate. IMP contacts are provided by residues 43–46 (DEGK), 68–71 (NAGH), T163, R177, N256, T271, and R335. H71 acts as the Proton donor in catalysis. Substrate is bound at residue 331-337 (VTTGRKR). Residues R337, 363–365 (KLD), and 445–448 (GVGK) contribute to the GTP site.

Belongs to the adenylosuccinate synthetase family. Homodimer. The cofactor is Mg(2+). In terms of tissue distribution, predominantly expressed in skeletal muscle and heart, as well as in several hematopoietic cell lines and solid tumors.

It localises to the cytoplasm. It carries out the reaction IMP + L-aspartate + GTP = N(6)-(1,2-dicarboxyethyl)-AMP + GDP + phosphate + 2 H(+). The protein operates within purine metabolism; AMP biosynthesis via de novo pathway; AMP from IMP: step 1/2. In terms of biological role, component of the purine nucleotide cycle (PNC), which interconverts IMP and AMP to regulate the nucleotide levels in various tissues, and which contributes to glycolysis and ammoniagenesis. Catalyzes the first committed step in the biosynthesis of AMP from IMP. The polypeptide is Adenylosuccinate synthetase isozyme 1 (Homo sapiens (Human)).